The chain runs to 190 residues: Peptide deformylase (190 aa).

Residues cysteine 94 and histidine 136 each coordinate Fe cation. Residue glutamate 137 is part of the active site. Residue histidine 140 participates in Fe cation binding.

The protein belongs to the polypeptide deformylase family. Fe(2+) serves as cofactor.

It catalyses the reaction N-terminal N-formyl-L-methionyl-[peptide] + H2O = N-terminal L-methionyl-[peptide] + formate. Its function is as follows. Removes the formyl group from the N-terminal Met of newly synthesized proteins. Requires at least a dipeptide for an efficient rate of reaction. N-terminal L-methionine is a prerequisite for activity but the enzyme has broad specificity at other positions. The sequence is that of Peptide deformylase from Chlorobium phaeovibrioides (strain DSM 265 / 1930) (Prosthecochloris vibrioformis (strain DSM 265)).